The chain runs to 463 residues: MAALRALCRLRGAAAQVLRPGAGVRLPIQPSRGARQWQPDVEWAEQYGGAVMYPTKETAHWKPPPWNDVDPPKDTLVSNLTLNFGPQHPAAHGVLRLVMELSGEMVRKCDPHIGLLHRGTEKLIEYKTYLQALPYFDRLDYVSMMCNEQAYSLAVEKLLNIQPPPRAQWIRVLFGEITRLLNHIMAVTTHALDIGAMTPFFWMFEEREKMFEFYERVSGARMHAAYVRPGGVHQDLPLGLMDDIYEFSKNFSLRIDELEEMLTNNRIWRNRTVDIGIVTAEDALNYGFSGVMLRGSGIQWDLRKTQPYDVYDQVEFDVPIGSRGDCYDRYLCRVEEMRQSIRIISQCLNKMPPGEIKVDDAKVSPPKRAEMKTSMESLIHHFKLYTEGYQVPPGATYTAIEAPKGEFGVYLVSDGSSRPYRCKIKAPGFAHLAGLDKMSKGHMLADVVAIIGTQDIVFGEVDR.

Residues 1-33 (MAALRALCRLRGAAAQVLRPGAGVRLPIQPSRG) constitute a mitochondrion transit peptide. The residue at position 62 (Lys62) is an N6-acetyllysine. Position 118 is a symmetric dimethylarginine (Arg118). Positions 326, 332, and 347 each coordinate [4Fe-4S] cluster.

It belongs to the complex I 49 kDa subunit family. As to quaternary structure, core subunit of respiratory chain NADH dehydrogenase (Complex I) which is composed of 45 different subunits. Component of the iron-sulfur (IP) fragment of the enzyme. Interacts with NDUFAF3. Interacts with NDUFAF7. Interacts with CERS2. It depends on [4Fe-4S] cluster as a cofactor. Post-translationally, dimethylation at Arg-118 by NDUFAF7 takes place after NDUFS2 assembles into the complex I, leading to stabilize the early intermediate complex.

It is found in the mitochondrion inner membrane. The enzyme catalyses a ubiquinone + NADH + 5 H(+)(in) = a ubiquinol + NAD(+) + 4 H(+)(out). Functionally, core subunit of the mitochondrial membrane respiratory chain NADH dehydrogenase (Complex I) which catalyzes electron transfer from NADH through the respiratory chain, using ubiquinone as an electron acceptor. Essential for the catalytic activity and assembly of complex I. Redox-sensitive, critical component of the oxygen-sensing pathway in the pulmonary vasculature which plays a key role in acute pulmonary oxygen-sensing and hypoxic pulmonary vasoconstriction. Plays an important role in carotid body sensing of hypoxia. Essential for glia-like neural stem and progenitor cell proliferation, differentiation and subsequent oligodendrocyte or neuronal maturation. The sequence is that of NADH dehydrogenase [ubiquinone] iron-sulfur protein 2, mitochondrial (NDUFS2) from Bos taurus (Bovine).